A 213-amino-acid chain; its full sequence is Guanylate kinase (213 aa).

The region spanning 10 to 189 (GLLLMVVAPS…AYADLAHIYH (180 aa)) is the Guanylate kinase-like domain. 17–24 (APSGVGKT) contacts ATP.

This sequence belongs to the guanylate kinase family.

The protein localises to the cytoplasm. It carries out the reaction GMP + ATP = GDP + ADP. In terms of biological role, essential for recycling GMP and indirectly, cGMP. This is Guanylate kinase (gmk) from Caulobacter vibrioides (strain ATCC 19089 / CIP 103742 / CB 15) (Caulobacter crescentus).